The sequence spans 334 residues: Ferredoxin--NADP reductase (334 aa).

Residues Asp-33, Gln-41, Tyr-46, Ala-86, Phe-120, Asp-286, and Thr-327 each coordinate FAD.

The protein belongs to the ferredoxin--NADP reductase type 2 family. As to quaternary structure, homodimer. It depends on FAD as a cofactor.

It carries out the reaction 2 reduced [2Fe-2S]-[ferredoxin] + NADP(+) + H(+) = 2 oxidized [2Fe-2S]-[ferredoxin] + NADPH. The chain is Ferredoxin--NADP reductase from Rickettsia typhi (strain ATCC VR-144 / Wilmington).